The following is a 223-amino-acid chain: Sigma non-opioid intracellular receptor 1 (223 aa).

The Lumenal portion of the chain corresponds to 1–9 (MCWAVGRRW). Positions 2 to 8 (CWAVGRR) are targeting to endoplasmic reticulum-associated lipid droplets. A helical transmembrane segment spans residues 10-30 (AWAALLLAVAAVLAQVVWLWL). The Cytoplasmic segment spans residues 31 to 223 (GTQSFVFQHE…LTTYLFGQDA (193 aa)). Positions 99–106 (SLSEYVLL) are important for ligand-binding. Positions 177–223 (VIPSTLGFALADTVFSTQDFLTLFYTLRAYARGLRLELTTYLFGQDA) are C-terminal hydrophobic region.

Belongs to the ERG2 family. As to quaternary structure, homotrimer. Forms a ternary complex with ANK2 and ITPR3. The complex is disrupted by agonists. Interacts with KCNA4. Interacts with KCNA2; cocaine consumption leads to increased interaction. Interacts with RNF112 in an oxidative stress-regulated manner.

Its subcellular location is the nucleus inner membrane. The protein resides in the nucleus outer membrane. The protein localises to the nucleus envelope. It localises to the cytoplasmic vesicle. It is found in the endoplasmic reticulum membrane. Its subcellular location is the membrane. The protein resides in the lipid droplet. The protein localises to the cell junction. It localises to the cell membrane. It is found in the cell projection. Its subcellular location is the growth cone. The protein resides in the postsynaptic density membrane. Functionally, functions in lipid transport from the endoplasmic reticulum and is involved in a wide array of cellular functions probably through regulation of the biogenesis of lipid microdomains at the plasma membrane. Involved in the regulation of different receptors it plays a role in BDNF signaling and EGF signaling. Also regulates ion channels like the potassium channel and could modulate neurotransmitter release. Plays a role in calcium signaling through modulation together with ANK2 of the ITP3R-dependent calcium efflux at the endoplasmic reticulum. Plays a role in several other cell functions including proliferation, survival and death. Originally identified for its ability to bind various psychoactive drugs it is involved in learning processes, memory and mood alteration. Necessary for proper mitochondrial axonal transport in motor neurons, in particular the retrograde movement of mitochondria. Plays a role in protecting cells against oxidative stress-induced cell death via its interaction with RNF112. In Bos taurus (Bovine), this protein is Sigma non-opioid intracellular receptor 1 (SIGMAR1).